A 414-amino-acid chain; its full sequence is Acetate kinase (414 aa).

Asn7 contributes to the Mg(2+) binding site. Lys14 contributes to the ATP binding site. Position 99 (Arg99) interacts with substrate. The active-site Proton donor/acceptor is the Asp157. Residues 217–221 and 341–345 each bind ATP; these read HLGNG and GIGEN. Mg(2+) is bound at residue Glu395.

Belongs to the acetokinase family. In terms of assembly, homodimer. Mg(2+) is required as a cofactor. The cofactor is Mn(2+).

It is found in the cytoplasm. It catalyses the reaction acetate + ATP = acetyl phosphate + ADP. It participates in metabolic intermediate biosynthesis; acetyl-CoA biosynthesis; acetyl-CoA from acetate: step 1/2. Catalyzes the formation of acetyl phosphate from acetate and ATP. Can also catalyze the reverse reaction. This Solibacter usitatus (strain Ellin6076) protein is Acetate kinase.